Reading from the N-terminus, the 178-residue chain is Dual-action ribosomal maturation protein DarP (178 aa).

It belongs to the DarP family.

Its subcellular location is the cytoplasm. Functionally, member of a network of 50S ribosomal subunit biogenesis factors which assembles along the 30S-50S interface, preventing incorrect 23S rRNA structures from forming. Promotes peptidyl transferase center (PTC) maturation. The chain is Dual-action ribosomal maturation protein DarP from Mannheimia succiniciproducens (strain KCTC 0769BP / MBEL55E).